A 350-amino-acid chain; its full sequence is Cilia- and flagella-associated protein 36 (350 aa).

Residues 142–167 (SELEQQEMKILQEVLRRSKEEYDLQM) adopt a coiled-coil conformation. Disordered stretches follow at residues 171–233 (GLGS…ATTA) and 301–337 (RQTGKGLTDTAAAAAPEPKPATQEISVEEKKKLQKRK). A compositionally biased stretch (polar residues) spans 177-220 (LASTSSSVSETPQNPEQRLSNGVSDPLTLTQPDSEMEESSTATQ). Positions 280-350 (VALQQRSEYL…EKLKEEVIKK (71 aa)) form a coiled coil.

It belongs to the CFAP36 family.

The protein resides in the nucleus. Its subcellular location is the cytoplasm. It is found in the cell projection. It localises to the cilium. The protein localises to the flagellum. This Danio rerio (Zebrafish) protein is Cilia- and flagella-associated protein 36.